Here is a 140-residue protein sequence, read N- to C-terminus: Large ribosomal subunit protein bL17 (140 aa).

The disordered stretch occupies residues Asp-119–Ala-140.

It belongs to the bacterial ribosomal protein bL17 family. As to quaternary structure, part of the 50S ribosomal subunit. Contacts protein L32.

The chain is Large ribosomal subunit protein bL17 from Zymomonas mobilis subsp. mobilis (strain ATCC 31821 / ZM4 / CP4).